A 564-amino-acid chain; its full sequence is 4-hydroxybutyrate--CoA ligase 1 (564 aa).

The helical transmembrane segment at 105–125 (VHPMHWAVFLAVIKGGFVMVP) threads the bilayer. ATP is bound by residues 204-212 (TSGTTGMPK), 343-348 (DFYGQT), Asp429, and Arg444. Thr348 provides a ligand contact to substrate. 452 to 454 (SDY) contacts CoA. Arg455 contacts substrate. CoA contacts are provided by residues Arg484, Lys513, and 521–523 (VPR). Lys538 is a binding site for ATP.

Belongs to the ATP-dependent AMP-binding enzyme family. Mg(2+) is required as a cofactor. The cofactor is Mn(2+).

It is found in the membrane. The catalysed reaction is 4-hydroxybutanoate + ATP + CoA = 4-hydroxybutanoyl-CoA + AMP + diphosphate. The enzyme catalyses acetate + ATP + CoA = acetyl-CoA + AMP + diphosphate. It carries out the reaction propanoate + ATP + CoA = propanoyl-CoA + AMP + diphosphate. It catalyses the reaction a medium-chain fatty acid + ATP + CoA = a medium-chain fatty acyl-CoA + AMP + diphosphate. In terms of biological role, involved in the 3-hydroxypropionate/4-hydroxybutyrate cycle which incorporates carbon dioxide into cellular carbon. Catalyzes the ligation of coenzyme A (CoA) to 4-hydroxybutyrate (4HB). It can also use butyrate, valerate, propionate, acetate and 3-hydroxybutyrate (3HB) as substrates. This is 4-hydroxybutyrate--CoA ligase 1 from Metallosphaera sedula (strain ATCC 51363 / DSM 5348 / JCM 9185 / NBRC 15509 / TH2).